The following is a 461-amino-acid chain: NADH-ubiquinone oxidoreductase chain 4 (461 aa).

13 helical membrane passes run P20–L42, P61–S81, Q93–A113, T114–I134, G147–M167, W197–L217, P225–M245, L258–L278, S285–T304, G309–A331, V351–P371, T393–L413, and L436–W456.

The protein belongs to the complex I subunit 4 family.

It localises to the mitochondrion membrane. The catalysed reaction is a ubiquinone + NADH + 5 H(+)(in) = a ubiquinol + NAD(+) + 4 H(+)(out). Functionally, core subunit of the mitochondrial membrane respiratory chain NADH dehydrogenase (Complex I) that is believed to belong to the minimal assembly required for catalysis. Complex I functions in the transfer of electrons from NADH to the respiratory chain. The immediate electron acceptor for the enzyme is believed to be ubiquinone. The polypeptide is NADH-ubiquinone oxidoreductase chain 4 (MT-ND4) (Latimeria chalumnae (Coelacanth)).